A 1794-amino-acid chain; its full sequence is Protein TIC 214 (1794 aa).

The next 6 helical transmembrane spans lie at 19–39, 68–88, 91–111, 133–153, 176–196, and 227–247; these read IINS…FSIG, FIAG…HLAL, PHTI…WNNH, VFLN…SSML, VGWL…LVWI, and IFSI…PSPI.

The protein belongs to the TIC214 family. As to quaternary structure, part of the Tic complex.

The protein localises to the plastid. Its subcellular location is the chloroplast inner membrane. In terms of biological role, involved in protein precursor import into chloroplasts. May be part of an intermediate translocation complex acting as a protein-conducting channel at the inner envelope. The polypeptide is Protein TIC 214 (Olimarabidopsis pumila (Dwarf rocket)).